Reading from the N-terminus, the 121-residue chain is Small ribosomal subunit protein uS13 (121 aa).

Residues 97–121 (VRGQRTRTNARTRRGARKTVAGKKK) form a disordered region. A compositionally biased stretch (basic residues) spans 100–121 (QRTRTNARTRRGARKTVAGKKK).

The protein belongs to the universal ribosomal protein uS13 family. In terms of assembly, part of the 30S ribosomal subunit. Forms a loose heterodimer with protein S19. Forms two bridges to the 50S subunit in the 70S ribosome.

Functionally, located at the top of the head of the 30S subunit, it contacts several helices of the 16S rRNA. In the 70S ribosome it contacts the 23S rRNA (bridge B1a) and protein L5 of the 50S subunit (bridge B1b), connecting the 2 subunits; these bridges are implicated in subunit movement. Contacts the tRNAs in the A and P-sites. The polypeptide is Small ribosomal subunit protein uS13 (Synechococcus sp. (strain WH7803)).